A 337-amino-acid polypeptide reads, in one-letter code: uncharacterized protein (337 aa).

In terms of domain architecture, F-box spans 22–76; that stretch reads PFRLLSLPTLALKNVLLHIDFIDLLELSLASKKCEIYMKTCCLKIDSLHFHFRRI.

This is an uncharacterized protein from Caenorhabditis elegans.